The primary structure comprises 103 residues: Large ribosomal subunit protein bL21 (103 aa).

This sequence belongs to the bacterial ribosomal protein bL21 family. As to quaternary structure, part of the 50S ribosomal subunit. Contacts protein L20.

Its function is as follows. This protein binds to 23S rRNA in the presence of protein L20. The sequence is that of Large ribosomal subunit protein bL21 from Escherichia coli O127:H6 (strain E2348/69 / EPEC).